Reading from the N-terminus, the 228-residue chain is RNA pyrophosphohydrolase (228 aa).

The interval 1–70 (MEKRSGIGRL…KQWVKMMNDI (70 aa)) is unknown. Residues 71 to 228 (VIDKRGFRLG…VLTEFAEFIR (158 aa)) are rppH domain. The 146-residue stretch at 76–221 (GFRLGVGMVI…KRDVYQKVLT (146 aa)) folds into the Nudix hydrolase domain. The short motif at 109–130 (GGLLPNETLREALNRELDEEVG) is the Nudix box element.

It in the C-terminal section; belongs to the Nudix hydrolase family. RppH subfamily. A divalent metal cation serves as cofactor.

Functionally, accelerates the degradation of transcripts by removing pyrophosphate from the 5'-end of triphosphorylated RNA, leading to a more labile monophosphorylated state that can stimulate subsequent ribonuclease cleavage. The sequence is that of RNA pyrophosphohydrolase from Coxiella burnetii (strain RSA 493 / Nine Mile phase I).